The primary structure comprises 716 residues: Calpain-1 catalytic subunit (716 aa).

In terms of domain architecture, Calpain catalytic spans 55–354 (LFRDEAFPPV…FTRLEICNLT (300 aa)). Gln-109 and Asp-114 together coordinate Ca(2+). Active-site residues include Cys-115, His-272, and Asn-296. Asp-318 and Glu-323 together coordinate Ca(2+). A Phosphothreonine modification is found at Thr-354. The interval 355 to 528 (PDALKSQRFR…KSAGTQELDD (174 aa)) is domain III. The segment at 529–544 (QVQANLPDEQVLSEEE) is linker. 4 consecutive EF-hand domains span residues 543 to 578 (EEID…IISK), 587 to 620 (FSLE…NRIR), 617 to 652 (NRIR…AGFK), and 682 to 716 (VRLE…TMFA). Positions 545 to 715 (IDENFKSLFR…LFKWLQLTMF (171 aa)) are domain IV. Ca(2+) is bound by residues Asp-600, Asp-602, Asn-604, Lys-606, Glu-611, Asp-630, Asp-632, Ser-634, Ser-636, and Glu-641.

The protein belongs to the peptidase C2 family. As to quaternary structure, forms a heterodimer with a small (regulatory) subunit CAPNS1. Ca(2+) is required as a cofactor. Undergoes calcium-induced successive autoproteolytic cleavages that generate a membrane-bound 78 kDa active form and an intracellular 75 kDa active form. Calpastatin reduces with high efficiency the transition from 78 kDa to 75 kDa calpain forms.

It is found in the cytoplasm. Its subcellular location is the cell membrane. The enzyme catalyses Broad endopeptidase specificity.. Activated by micromolar concentrations of calcium and inhibited by calpastatin. Functionally, calcium-regulated non-lysosomal thiol-protease which catalyzes limited proteolysis of substrates involved in cytoskeletal remodeling and signal transduction. Proteolytically cleaves CTBP1. Cleaves and activates caspase-7 (CASP7). This Bos taurus (Bovine) protein is Calpain-1 catalytic subunit.